An 88-amino-acid chain; its full sequence is Small ribosomal subunit protein bS20 (88 aa).

Belongs to the bacterial ribosomal protein bS20 family.

Its function is as follows. Binds directly to 16S ribosomal RNA. In Bradyrhizobium sp. (strain BTAi1 / ATCC BAA-1182), this protein is Small ribosomal subunit protein bS20.